The primary structure comprises 305 residues: UDP-3-O-acyl-N-acetylglucosamine deacetylase (305 aa).

H79, H238, and D242 together coordinate Zn(2+). H265 serves as the catalytic Proton donor.

The protein belongs to the LpxC family. Requires Zn(2+) as cofactor.

It carries out the reaction a UDP-3-O-[(3R)-3-hydroxyacyl]-N-acetyl-alpha-D-glucosamine + H2O = a UDP-3-O-[(3R)-3-hydroxyacyl]-alpha-D-glucosamine + acetate. The protein operates within glycolipid biosynthesis; lipid IV(A) biosynthesis; lipid IV(A) from (3R)-3-hydroxytetradecanoyl-[acyl-carrier-protein] and UDP-N-acetyl-alpha-D-glucosamine: step 2/6. Its function is as follows. Catalyzes the hydrolysis of UDP-3-O-myristoyl-N-acetylglucosamine to form UDP-3-O-myristoylglucosamine and acetate, the committed step in lipid A biosynthesis. The sequence is that of UDP-3-O-acyl-N-acetylglucosamine deacetylase from Vibrio vulnificus (strain CMCP6).